Reading from the N-terminus, the 213-residue chain is Ribosomal RNA large subunit methyltransferase E (213 aa).

Residues G60, W62, D80, D96, and D121 each coordinate S-adenosyl-L-methionine. K161 serves as the catalytic Proton acceptor.

It belongs to the class I-like SAM-binding methyltransferase superfamily. RNA methyltransferase RlmE family.

Its subcellular location is the cytoplasm. It carries out the reaction uridine(2552) in 23S rRNA + S-adenosyl-L-methionine = 2'-O-methyluridine(2552) in 23S rRNA + S-adenosyl-L-homocysteine + H(+). In terms of biological role, specifically methylates the uridine in position 2552 of 23S rRNA at the 2'-O position of the ribose in the fully assembled 50S ribosomal subunit. The sequence is that of Ribosomal RNA large subunit methyltransferase E from Xylella fastidiosa (strain M23).